Consider the following 140-residue polypeptide: CBS domain-containing protein YhcV (140 aa).

CBS domains lie at 8 to 64 and 72 to 127; these read MTTQ…GRDG and MSTE…NESA.

The chain is CBS domain-containing protein YhcV (yhcV) from Bacillus subtilis (strain 168).